We begin with the raw amino-acid sequence, 365 residues long: Aminomethyltransferase (365 aa).

Belongs to the GcvT family. As to quaternary structure, the glycine cleavage system is composed of four proteins: P, T, L and H.

It carries out the reaction N(6)-[(R)-S(8)-aminomethyldihydrolipoyl]-L-lysyl-[protein] + (6S)-5,6,7,8-tetrahydrofolate = N(6)-[(R)-dihydrolipoyl]-L-lysyl-[protein] + (6R)-5,10-methylene-5,6,7,8-tetrahydrofolate + NH4(+). Functionally, the glycine cleavage system catalyzes the degradation of glycine. The polypeptide is Aminomethyltransferase (Yersinia pseudotuberculosis serotype O:1b (strain IP 31758)).